A 548-amino-acid polypeptide reads, in one-letter code: Malate:quinone oxidoreductase (548 aa).

Residues 521-548 form a disordered region; sequence DKPQAADSTPKPQLKPQPVQKEVADIAL. Residues 530-541 show a composition bias toward low complexity; the sequence is PKPQLKPQPVQK.

This sequence belongs to the MQO family. The cofactor is FAD.

The enzyme catalyses (S)-malate + a quinone = a quinol + oxaloacetate. The protein operates within carbohydrate metabolism; tricarboxylic acid cycle; oxaloacetate from (S)-malate (quinone route): step 1/1. This chain is Malate:quinone oxidoreductase (mqo), found in Escherichia coli (strain K12).